The primary structure comprises 242 residues: 3-deoxy-manno-octulosonate cytidylyltransferase (242 aa).

Belongs to the KdsB family.

The protein localises to the cytoplasm. It catalyses the reaction 3-deoxy-alpha-D-manno-oct-2-ulosonate + CTP = CMP-3-deoxy-beta-D-manno-octulosonate + diphosphate. The protein operates within nucleotide-sugar biosynthesis; CMP-3-deoxy-D-manno-octulosonate biosynthesis; CMP-3-deoxy-D-manno-octulosonate from 3-deoxy-D-manno-octulosonate and CTP: step 1/1. It participates in bacterial outer membrane biogenesis; lipopolysaccharide biosynthesis. In terms of biological role, activates KDO (a required 8-carbon sugar) for incorporation into bacterial lipopolysaccharide in Gram-negative bacteria. The sequence is that of 3-deoxy-manno-octulosonate cytidylyltransferase from Anaeromyxobacter sp. (strain K).